Reading from the N-terminus, the 638-residue chain is 3D-(3,5/4)-trihydroxycyclohexane-1,2-dione hydrolase (638 aa).

E67 is a thiamine diphosphate binding site. A thiamine pyrophosphate binding region spans residues 442-523 (SLPGDLQRLW…INIMLFDNSG (82 aa)). The Mg(2+) site is built by D494 and N521.

The protein belongs to the TPP enzyme family. Mg(2+) serves as cofactor. The cofactor is thiamine diphosphate.

It carries out the reaction 3D-3,5/4-trihydroxycyclohexane-1,2-dione + H2O = 5-deoxy-D-glucuronate + H(+). The protein operates within polyol metabolism; myo-inositol degradation into acetyl-CoA; acetyl-CoA from myo-inositol: step 3/7. In terms of biological role, involved in the cleavage of the C1-C2 bond of 3D-(3,5/4)-trihydroxycyclohexane-1,2-dione (THcHDO) to yield 5-deoxy-glucuronate (5DG). The polypeptide is 3D-(3,5/4)-trihydroxycyclohexane-1,2-dione hydrolase (Listeria innocua serovar 6a (strain ATCC BAA-680 / CLIP 11262)).